The following is a 187-amino-acid chain: Protein SCM4 (187 aa).

3 helical membrane-spanning segments follow: residues 11–31, 45–65, and 80–100; these read IAVSSLGLYAGILTSSTVISI, VLCTLGCWSTVLGGLATGAFG, and LLCGLGVAPLSAAYLYLVSLF. Residues 114–134 show a composition bias toward basic and acidic residues; that stretch reads DLEKQKDEKLPQHHPEVKDGE. Residues 114–135 are disordered; sequence DLEKQKDEKLPQHHPEVKDGEA. Residues 162–182 traverse the membrane as a helical segment; that stretch reads MSLHMSIVTGITIFTFGKCIL.

Belongs to the ATG33 family.

The protein resides in the membrane. The chain is Protein SCM4 (SCM4) from Saccharomyces cerevisiae (strain ATCC 204508 / S288c) (Baker's yeast).